The primary structure comprises 251 residues: Imidazole glycerol phosphate synthase subunit HisF (251 aa).

Catalysis depends on residues Asp-11 and Asp-130.

This sequence belongs to the HisA/HisF family. As to quaternary structure, heterodimer of HisH and HisF.

The protein localises to the cytoplasm. It catalyses the reaction 5-[(5-phospho-1-deoxy-D-ribulos-1-ylimino)methylamino]-1-(5-phospho-beta-D-ribosyl)imidazole-4-carboxamide + L-glutamine = D-erythro-1-(imidazol-4-yl)glycerol 3-phosphate + 5-amino-1-(5-phospho-beta-D-ribosyl)imidazole-4-carboxamide + L-glutamate + H(+). The protein operates within amino-acid biosynthesis; L-histidine biosynthesis; L-histidine from 5-phospho-alpha-D-ribose 1-diphosphate: step 5/9. Functionally, IGPS catalyzes the conversion of PRFAR and glutamine to IGP, AICAR and glutamate. The HisF subunit catalyzes the cyclization activity that produces IGP and AICAR from PRFAR using the ammonia provided by the HisH subunit. The sequence is that of Imidazole glycerol phosphate synthase subunit HisF from Chlorobium chlorochromatii (strain CaD3).